Reading from the N-terminus, the 286-residue chain is ATP synthase gamma chain (286 aa).

Belongs to the ATPase gamma chain family. As to quaternary structure, F-type ATPases have 2 components, CF(1) - the catalytic core - and CF(0) - the membrane proton channel. CF(1) has five subunits: alpha(3), beta(3), gamma(1), delta(1), epsilon(1). CF(0) has three main subunits: a, b and c.

It is found in the cell inner membrane. Its function is as follows. Produces ATP from ADP in the presence of a proton gradient across the membrane. The gamma chain is believed to be important in regulating ATPase activity and the flow of protons through the CF(0) complex. The sequence is that of ATP synthase gamma chain from Fuscovulum blasticum (Rhodobacter blasticus).